A 204-amino-acid chain; its full sequence is 3-isopropylmalate dehydratase small subunit (204 aa).

Belongs to the LeuD family. LeuD type 1 subfamily. As to quaternary structure, heterodimer of LeuC and LeuD.

The enzyme catalyses (2R,3S)-3-isopropylmalate = (2S)-2-isopropylmalate. It functions in the pathway amino-acid biosynthesis; L-leucine biosynthesis; L-leucine from 3-methyl-2-oxobutanoate: step 2/4. Functionally, catalyzes the isomerization between 2-isopropylmalate and 3-isopropylmalate, via the formation of 2-isopropylmaleate. This Ruthia magnifica subsp. Calyptogena magnifica protein is 3-isopropylmalate dehydratase small subunit.